Reading from the N-terminus, the 227-residue chain is Cysteine-rich hydrophobic domain-containing protein 1 (227 aa).

The disordered stretch occupies residues 1–84 (MSILLPNMAE…PPRVVSEEHL (84 aa)). Residues 13–23 (TISELEEEEEA) are compositionally biased toward acidic residues. Low complexity predominate over residues 24–44 (ATSSSSPSSSPSSSSSSSVSG). Acidic residues predominate over residues 45–72 (PDEDEEDEEEEEEEDEEEEDEEEEEEEV). Residues 46 to 73 (DEDEEDEEEEEEEDEEEEDEEEEEEEVP) adopt a coiled-coil conformation.

It belongs to the CHIC family. Palmitoylated. In terms of tissue distribution, expressed moderately in the brain.

Its subcellular location is the cell membrane. It is found in the cytoplasmic vesicle. The polypeptide is Cysteine-rich hydrophobic domain-containing protein 1 (Chic1) (Mus musculus (Mouse)).